Reading from the N-terminus, the 332-residue chain is Beta-ketoacyl-[acyl-carrier-protein] synthase III 5 (332 aa).

Residues cysteine 111 and histidine 253 contribute to the active site. Residues 254-258 (QANAR) are ACP-binding. Asparagine 283 is an active-site residue.

Belongs to the thiolase-like superfamily. FabH family. As to quaternary structure, homodimer.

The protein resides in the cytoplasm. It carries out the reaction malonyl-[ACP] + acetyl-CoA + H(+) = 3-oxobutanoyl-[ACP] + CO2 + CoA. Its pathway is lipid metabolism; fatty acid biosynthesis. Catalyzes the condensation reaction of fatty acid synthesis by the addition to an acyl acceptor of two carbons from malonyl-ACP. Catalyzes the first condensation reaction which initiates fatty acid synthesis and may therefore play a role in governing the total rate of fatty acid production. Possesses both acetoacetyl-ACP synthase and acetyl transacylase activities. Its substrate specificity determines the biosynthesis of branched-chain and/or straight-chain of fatty acids. This chain is Beta-ketoacyl-[acyl-carrier-protein] synthase III 5, found in Streptomyces coelicolor (strain ATCC BAA-471 / A3(2) / M145).